A 704-amino-acid polypeptide reads, in one-letter code: Elongation factor G (704 aa).

The tr-type G domain occupies 8-290 (ARYRNIGISA…AVIDYLPAPT (283 aa)). Residues 17 to 24 (AHIDAGKT), 88 to 92 (DTPGH), and 142 to 145 (NKMD) each bind GTP.

Belongs to the TRAFAC class translation factor GTPase superfamily. Classic translation factor GTPase family. EF-G/EF-2 subfamily.

The protein resides in the cytoplasm. Its function is as follows. Catalyzes the GTP-dependent ribosomal translocation step during translation elongation. During this step, the ribosome changes from the pre-translocational (PRE) to the post-translocational (POST) state as the newly formed A-site-bound peptidyl-tRNA and P-site-bound deacylated tRNA move to the P and E sites, respectively. Catalyzes the coordinated movement of the two tRNA molecules, the mRNA and conformational changes in the ribosome. This is Elongation factor G from Pectobacterium atrosepticum (strain SCRI 1043 / ATCC BAA-672) (Erwinia carotovora subsp. atroseptica).